The following is a 1333-amino-acid chain: MVSCWDTAVLPYALLGCLLLTGYGSGSKLKVPELSLKGTQHVMQAGQTLFLKCRGEAAHSWSLPTTVSQEDKRLSITPPSACGRDNRQFCSTLTLDTAQANHTGLYTCRYLPTSTSKKKKAESSIYIFVSDAGSPFIEMHTDIPKLVHMTEGRQLIIPCRVTSPNVTVTLKKFPFDTLTPDGQRITWDSRRGFIIANATYKEIGLLNCEATVNGHLYQTNYLTHRQTNTILDVQIRPPSPVRLLHGQTLVLNCTATTELNTRVQMSWNYPGKATKRASIRQRIDRSHSHNNVFHSVLKINNVESRDKGLYTCRVKSGSSFQSFNTSVHVYEKGFISVKHRKQPVQETTAGRRSYRLSMKVKAFPSPEIVWLKDGSPATLKSARYLVHGYSLIIKDVTTEDAGDYTILLGIKQSRLFKNLTATLIVNVKPQIYEKSVSSLPSPPLYPLGSRQVLTCTVYGIPRPTITWLWHPCHHNHSKERYDFCTENEESFILDPSSNLGNRIESISQRMTVIEGTNKTVSTLVVADSQTPGIYSCRAFNKIGTVERNIKFYVTDVPNGFHVSLEKMPAEGEDLKLSCVVNKFLYRDITWILLRTVNNRTMHHSISKQKMATTQDYSITLNLVIKNVSLEDSGTYACRARNIYTGEDILRKTEVLVRDSEAPHLLQNLSDYEVSISGSTTLDCQARGVPAPQITWFKNNHKIQQEPGIILGPGNSTLFIERVTEEDEGVYRCRATNQKGAVESAAYLTVQGTSDKSNLELITLTCTCVAATLFWLLLTLFIRKLKRSSSEVKTDYLSIIMDPDEVPLDEQCERLPYDASKWEFARERLKLGKSLGRGAFGKVVQASAFGIKKSPTCRTVAVKMLKEGATASEYKALMTELKILTHIGHHLNVVNLLGACTKQGGPLMVIVEYCKYGNLSNYLKSKRDLFCLNKDAALHMELKKESLEPGLEQGQKPRLDSVSSSSVTSSSFPEDRSVSDVEGDEDYSEISKQPLTMEDLISYSFQVARGMEFLSSRKCIHRDLAARNILLSENNVVKICDFGLARDIYKNPDYVRRGDTRLPLKWMAPESIFDKVYSTKSDVWSYGVLLWEIFSLGGSPYPGVQMDEDFCSRLKEGMRMRTPEYATPEIYQIMLDCWHKDPKERPRFAELVEKLGDLLQANVQQDGKDYIPLNAILTRNSSFTYSTPTFSEDLFKDGFADPHFHSGSSDDVRYVNAFKFMSLERIKTFEELSPNSTSMFEDYQLDTSTLLGSPLLKRFTWTETKPKASMKIDLRIASKSKEAGLSDLPRPSFCFSSCGHIRPVQDDESELGKESCCSPPPDYNSVVLYSSPPA.

The first 22 residues, 1-22 (MVSCWDTAVLPYALLGCLLLTG), serve as a signal peptide directing secretion. Residues 23 to 759 (YGSGSKLKVP…QGTSDKSNLE (737 aa)) are Extracellular-facing. Ig-like C2-type domains are found at residues 32–124 (PELS…AESS), 152–215 (GRQL…VNGH), 231–328 (LDVQ…TSVH), 334–429 (FISV…NVKP), 430–550 (QIYE…RNIK), 557–656 (PNGF…EVLV), and 662–748 (PHLL…AYLT). Intrachain disulfides connect cysteine 53/cysteine 108 and cysteine 159/cysteine 208. N-linked (GlcNAc...) asparagine glycosylation is found at asparagine 101, asparagine 165, asparagine 197, and asparagine 252. Cysteine 253 and cysteine 312 are joined by a disulfide. Residues asparagine 324, asparagine 418, asparagine 475, asparagine 517, asparagine 598, asparagine 626, asparagine 667, and asparagine 714 are each glycosylated (N-linked (GlcNAc...) asparagine). 2 cysteine pairs are disulfide-bonded: cysteine 455–cysteine 536 and cysteine 578–cysteine 637. Cysteine 683 and cysteine 732 are joined by a disulfide. A helical membrane pass occupies residues 760–781 (LITLTCTCVAATLFWLLLTLFI). Residues 782-1333 (RKLKRSSSEV…SVVLYSSPPA (552 aa)) lie on the Cytoplasmic side of the membrane. The Protein kinase domain occupies 828 to 1158 (LKLGKSLGRG…ELVEKLGDLL (331 aa)). Residues 834-842 (LGRGAFGKV) and lysine 862 contribute to the ATP site. Tyrosine 915 carries the phosphotyrosine; by autocatalysis modification. The segment at 947–983 (EPGLEQGQKPRLDSVSSSSVTSSSFPEDRSVSDVEGD) is disordered. Residues 960 to 970 (SVSSSSVTSSS) show a composition bias toward low complexity. The Proton acceptor role is filled by aspartate 1022. 6 positions are modified to phosphotyrosine; by autocatalysis: tyrosine 1053, tyrosine 1169, tyrosine 1213, tyrosine 1242, tyrosine 1322, and tyrosine 1328.

Belongs to the protein kinase superfamily. Tyr protein kinase family. CSF-1/PDGF receptor subfamily. In terms of assembly, interacts with VEGFA, VEGFB and PGF. Monomer in the absence of bound VEGFA, VEGFB or PGF. Homodimer in the presence of bound VEGFA, VEGFB and PGF. Can also form a heterodimer with KDR. Interacts (tyrosine phosphorylated) with CBL, CRK, GRB2, NCK1, PIK3R1, PLCG, PSEN1 and PTPN11. Probably interacts with PTPRB. Interacts with RACK1. Identified in a complex with CBL and CD2AP. Post-translationally, N-glycosylated. Ubiquitinated after VEGFA-mediated autophosphorylation, leading to proteolytic degradation. In terms of processing, autophosphorylated on tyrosine residues upon ligand binding. Autophosphorylation occurs in trans, i.e. one subunit of the dimeric receptor phosphorylates tyrosine residues on the other subunit. Phosphorylation at Tyr-1169 is important for interaction with PLCG. Phosphorylation at Tyr-1213 is important for interaction with PIK3R1, PTPN11, GRB2, and PLCG. Phosphorylation at Tyr-1328 is important for endocytosis and for interaction with CBL, NCK1 and CRK. Is probably dephosphorylated by PTPRB.

It localises to the cell membrane. The protein resides in the endosome. It carries out the reaction L-tyrosyl-[protein] + ATP = O-phospho-L-tyrosyl-[protein] + ADP + H(+). Its activity is regulated as follows. Present in an inactive conformation in the absence of bound ligand. Binding of VEGFA, VEGFB or PGF leads to dimerization and activation by autophosphorylation on tyrosine residues. Its function is as follows. Tyrosine-protein kinase that acts as a cell-surface receptor for VEGFA, VEGFB and PGF, and plays an essential role in the development of embryonic vasculature, the regulation of angiogenesis, cell survival, cell migration, macrophage function, chemotaxis, and cancer cell invasion. Acts as a positive regulator of postnatal retinal hyaloid vessel regression. May play an essential role as a negative regulator of embryonic angiogenesis by inhibiting excessive proliferation of endothelial cells. Can promote endothelial cell proliferation, survival and angiogenesis in adulthood. Its function in promoting cell proliferation seems to be cell-type specific. Promotes PGF-mediated proliferation of endothelial cells, and proliferation of some types of cancer cells, but does not promote proliferation of normal fibroblasts. Has very high affinity for VEGFA and relatively low protein kinase activity; may function as a negative regulator of VEGFA signaling by limiting the amount of free VEGFA and preventing its binding to KDR. Modulates KDR signaling by forming heterodimers with KDR. Ligand binding leads to the activation of several signaling cascades. Activation of PLCG leads to the production of the cellular signaling molecules diacylglycerol and inositol 1,4,5-trisphosphate and the activation of protein kinase C. Mediates phosphorylation of PIK3R1, the regulatory subunit of phosphatidylinositol 3-kinase, leading to the activation of phosphatidylinositol kinase and the downstream signaling pathway. Mediates activation of MAPK1/ERK2, MAPK3/ERK1 and the MAP kinase signaling pathway, as well as of the AKT1 signaling pathway. Phosphorylates SRC, YES1 and PLCG, and may also phosphorylate CBL. Promotes phosphorylation of AKT1 and PTK2/FAK1. This chain is Vascular endothelial growth factor receptor 1 (Flt1), found in Mus musculus (Mouse).